A 355-amino-acid polypeptide reads, in one-letter code: Cyanide hydratase (355 aa).

A CN hydrolase domain is found at 6 to 285 (YKAAAVTSEP…DGLLFVDIDL (280 aa)). The Proton acceptor role is filled by Glu46. Residue Lys128 is part of the active site. Cys163 acts as the Nucleophile in catalysis.

Belongs to the carbon-nitrogen hydrolase superfamily. Nitrilase family. In terms of assembly, oligomer of dimers, forming left-handed helical fibers.

The catalysed reaction is formamide = hydrogen cyanide + H2O. Catalyzes the hydration of cyanide to formamide. Degradation of cyanide may be important for plant pathogenic fungi in infection of cyanogenic plants. This chain is Cyanide hydratase, found in Gibberella zeae (strain ATCC MYA-4620 / CBS 123657 / FGSC 9075 / NRRL 31084 / PH-1) (Wheat head blight fungus).